The sequence spans 379 residues: Neutral protease 2 homolog TRV_03208 (379 aa).

Positions 1–19 (MKFFTALAAVGALLAPALA) are cleaved as a signal peptide. A propeptide spanning residues 20-187 (LPTPASEEAS…DYFSKSLDKR (168 aa)) is cleaved from the precursor. Intrachain disulfides connect C193–C263 and C270–C288. N-linked (GlcNAc...) asparagine glycosylation occurs at N221. A Zn(2+)-binding site is contributed by H312. E313 is a catalytic residue. Zn(2+) contacts are provided by H316 and D327.

It belongs to the peptidase M35 family. Zn(2+) is required as a cofactor.

It is found in the secreted. The enzyme catalyses Preferential cleavage of bonds with hydrophobic residues in P1'. Also 3-Asn-|-Gln-4 and 8-Gly-|-Ser-9 bonds in insulin B chain.. In terms of biological role, secreted metalloproteinase that allows assimilation of proteinaceous substrates. Shows high activities on basic nuclear substrates such as histone and protamine. May be involved in virulence. The chain is Neutral protease 2 homolog TRV_03208 from Trichophyton verrucosum (strain HKI 0517).